The sequence spans 151 residues: D-aminoacyl-tRNA deacylase (151 aa).

The short motif at 137–138 (GP) is the Gly-cisPro motif, important for rejection of L-amino acids element.

This sequence belongs to the DTD family. Homodimer.

It is found in the cytoplasm. The enzyme catalyses glycyl-tRNA(Ala) + H2O = tRNA(Ala) + glycine + H(+). It catalyses the reaction a D-aminoacyl-tRNA + H2O = a tRNA + a D-alpha-amino acid + H(+). Functionally, an aminoacyl-tRNA editing enzyme that deacylates mischarged D-aminoacyl-tRNAs. Also deacylates mischarged glycyl-tRNA(Ala), protecting cells against glycine mischarging by AlaRS. Acts via tRNA-based rather than protein-based catalysis; rejects L-amino acids rather than detecting D-amino acids in the active site. By recycling D-aminoacyl-tRNA to D-amino acids and free tRNA molecules, this enzyme counteracts the toxicity associated with the formation of D-aminoacyl-tRNA entities in vivo and helps enforce protein L-homochirality. This is D-aminoacyl-tRNA deacylase from Solibacter usitatus (strain Ellin6076).